The primary structure comprises 331 residues: Inactive serine/threonine-protein kinase BKN1 (331 aa).

G2 carries N-myristoyl glycine lipidation. C4 carries S-palmitoyl cysteine lipidation. One can recognise a Protein kinase domain in the interval 58–328 (DYSVRKFYKG…VLDGLNHIAE (271 aa)).

Belongs to the protein kinase superfamily. Ser/Thr protein kinase family. As to expression, restricted to stigma in flowers.

It is found in the cell membrane. It localises to the nucleus. Collaboratively with BKN2/SZE2, involved in compatible pollen-stigma interactions. In Arabidopsis thaliana (Mouse-ear cress), this protein is Inactive serine/threonine-protein kinase BKN1.